The chain runs to 172 residues: Putative metal-dependent hydrolase OB0782 (172 aa).

Positions 64, 155, and 159 each coordinate Zn(2+).

It belongs to the metal hydrolase YfiT family. In terms of assembly, homodimer. The cofactor is Zn(2+).

The protein localises to the cytoplasm. In terms of biological role, possible metal-dependent hydrolase. The protein is Putative metal-dependent hydrolase OB0782 of Oceanobacillus iheyensis (strain DSM 14371 / CIP 107618 / JCM 11309 / KCTC 3954 / HTE831).